The following is a 192-amino-acid chain: Ion-translocating oxidoreductase complex subunit A (192 aa).

The next 6 membrane-spanning stretches (helical) occupy residues 5–25, 39–59, 63–83, 102–122, 134–154, and 171–191; these read ILLI…FLGL, VGMG…AYLV, ILIP…VIAV, LLGI…VALL, VVYG…FAAL, and AIAL…TGLV.

The protein belongs to the NqrDE/RnfAE family. The complex is composed of six subunits: RnfA, RnfB, RnfC, RnfD, RnfE and RnfG.

Its subcellular location is the cell inner membrane. Its function is as follows. Part of a membrane-bound complex that couples electron transfer with translocation of ions across the membrane. The sequence is that of Ion-translocating oxidoreductase complex subunit A from Haemophilus influenzae (strain 86-028NP).